The chain runs to 392 residues: Phosphoglycerate kinase (392 aa).

Substrate is bound by residues 21-23, arginine 36, 59-62, arginine 113, and arginine 146; these read DFN and HLGR. Residues lysine 197, glutamate 319, and 345-348 each bind ATP; that span reads GGDT.

It belongs to the phosphoglycerate kinase family. Monomer.

Its subcellular location is the cytoplasm. It carries out the reaction (2R)-3-phosphoglycerate + ATP = (2R)-3-phospho-glyceroyl phosphate + ADP. It functions in the pathway carbohydrate degradation; glycolysis; pyruvate from D-glyceraldehyde 3-phosphate: step 2/5. This chain is Phosphoglycerate kinase, found in Francisella tularensis subsp. holarctica (strain FTNF002-00 / FTA).